Here is a 243-residue protein sequence, read N- to C-terminus: DNA repair protein RecO (243 aa).

The protein belongs to the RecO family.

Functionally, involved in DNA repair and RecF pathway recombination. The polypeptide is DNA repair protein RecO (Frankia casuarinae (strain DSM 45818 / CECT 9043 / HFP020203 / CcI3)).